The primary structure comprises 209 residues: Outer-membrane lipoprotein carrier protein (209 aa).

Positions 1-21 (MHRQLRYAVLATALFASTAFA) are cleaved as a signal peptide.

Belongs to the LolA family. In terms of assembly, monomer.

The protein resides in the periplasm. In terms of biological role, participates in the translocation of lipoproteins from the inner membrane to the outer membrane. Only forms a complex with a lipoprotein if the residue after the N-terminal Cys is not an aspartate (The Asp acts as a targeting signal to indicate that the lipoprotein should stay in the inner membrane). This Xanthomonas campestris pv. campestris (strain 8004) protein is Outer-membrane lipoprotein carrier protein.